We begin with the raw amino-acid sequence, 400 residues long: EGCKPCECDKSGSRLEQCNLYDGQCDCVDGRGGRDCSQCPEMSWGDPFLGCKSCTCNPDGARSLYCNKVTGQCECPRGVTGLNCDRCDRGTYGALPQCIPCGECFDNWDKLIAQLRDEAAAQLRIGTEIKLSGPPGAFAKEFEELEQVLMDMKSHVNSANVSSDQLENIDQELDNLSSKLKDLKPNLASHGSRTGEASVKISELYSRVLNLQSEFNKSSAKTKELRENALEIQEQDVSGAYASIQESLVKSSALQAKLTDAENSKNISVYFRTSVEHFLQNSNFSDANSENGNENSLDKVVEFMKAVDENVSSINTELCGGTGSPCHEDCGGAMCGKCGGELCGDGAVTKAVEAKNTSRKAEELIKSKYRSTSSTLSELENSNKQCKQATAEAKNNAHEA.

Laminin EGF-like domains are found at residues 1–5, 6–53, and 54–100; these read EGCKP, CECD…GCKS, and CTCN…QCIP. Disulfide bonds link Cys6/Cys18, Cys8/Cys25, Cys27/Cys36, Cys39/Cys51, Cys54/Cys66, Cys56/Cys73, Cys75/Cys84, and Cys87/Cys98. Positions 101–400 are domain II and I; sequence CGECFDNWDK…AEAKNNAHEA (300 aa). Residues 140–235 are a coiled coil; sequence KEFEELEQVL…RENALEIQEQ (96 aa). Asn160, Asn175, Asn216, Asn266, Asn283, Asn310, and Asn356 each carry an N-linked (GlcNAc...) asparagine glycan. Positions 353 to 400 form a coiled coil; the sequence is EAKNTSRKAEELIKSKYRSTSSTLSELENSNKQCKQATAEAKNNAHEA. Positions 369-400 are disordered; sequence YRSTSSTLSELENSNKQCKQATAEAKNNAHEA. Positions 371-383 are enriched in low complexity; the sequence is STSSTLSELENSN.

In terms of assembly, laminin is a complex glycoprotein, consisting of three different polypeptide chains (alpha, beta, gamma), which are bound to each other by disulfide bonds into a cross-shaped molecule comprising one long and three short arms with globules at each end. In terms of tissue distribution, individual glial and muscle cells.

The protein localises to the secreted. The protein resides in the extracellular space. It is found in the extracellular matrix. Binding to cells via a high affinity receptor, laminin is thought to mediate the attachment, migration and organization of cells into tissues during embryonic development by interacting with other extracellular matrix components. This Hirudo medicinalis (Medicinal leech) protein is Laminin subunit B.